The primary structure comprises 264 residues: uncharacterized protein (264 aa).

3 helical membrane-spanning segments follow: residues leucine 48–phenylalanine 68, isoleucine 112–alanine 132, and leucine 142–isoleucine 162. Serine 260 bears the Phosphoserine mark.

Its subcellular location is the membrane. This is an uncharacterized protein from Schizosaccharomyces pombe (strain 972 / ATCC 24843) (Fission yeast).